A 329-amino-acid polypeptide reads, in one-letter code: Nitrogenase iron-iron protein beta chain (329 aa).

4 residues coordinate [8Fe-7S] cluster: Cys-20, Cys-45, Cys-104, and Ser-143. Residues Ser-213–Gln-288 are disordered. Residues Arg-257–Tyr-271 are compositionally biased toward basic residues.

The protein belongs to the NifD/NifK/NifE/NifN family. In terms of assembly, hexamer of two alpha, two beta, and two delta chains. It depends on [8Fe-7S] cluster as a cofactor.

The catalysed reaction is N2 + 8 reduced [2Fe-2S]-[ferredoxin] + 16 ATP + 16 H2O = H2 + 8 oxidized [2Fe-2S]-[ferredoxin] + 2 NH4(+) + 16 ADP + 16 phosphate + 6 H(+). Its function is as follows. This iron-iron protein is part of the nitrogenase complex that catalyzes the key enzymatic reactions in nitrogen fixation. Other nitrogenase complexes utilize a molybdenum-iron protein or a vanadium-iron protein. This Ruminiclostridium hungatei (Clostridium hungatei) protein is Nitrogenase iron-iron protein beta chain (anfK).